Reading from the N-terminus, the 210-residue chain is uncharacterized protein (210 aa).

This is an uncharacterized protein from Treponema pallidum (strain Nichols).